The primary structure comprises 66 residues: Large ribosomal subunit protein bL33 (66 aa).

The protein belongs to the bacterial ribosomal protein bL33 family.

This chain is Large ribosomal subunit protein bL33, found in Synechococcus sp. (strain CC9311).